We begin with the raw amino-acid sequence, 157 residues long: MEKVPMTTAGFESLKEELRWRQQQERPRIIEAISEARAHGDLSENAEYHAAKEAQSHNEGRINELEDYIARAEVIDVSRLSGDKIKFGATIKLLDEDTEEKKVYQIVGDQEADVKIGKISISSPIARALIGKQEGDVIEVNAPGGAHNYEIIKVQYI.

Belongs to the GreA/GreB family.

Functionally, necessary for efficient RNA polymerase transcription elongation past template-encoded arresting sites. The arresting sites in DNA have the property of trapping a certain fraction of elongating RNA polymerases that pass through, resulting in locked ternary complexes. Cleavage of the nascent transcript by cleavage factors such as GreA or GreB allows the resumption of elongation from the new 3'terminus. GreA releases sequences of 2 to 3 nucleotides. The polypeptide is Transcription elongation factor GreA (Bartonella tribocorum (strain CIP 105476 / IBS 506)).